The primary structure comprises 214 residues: ATP phosphoribosyltransferase (214 aa).

This sequence belongs to the ATP phosphoribosyltransferase family. Short subfamily. In terms of assembly, heteromultimer composed of HisG and HisZ subunits.

It localises to the cytoplasm. It catalyses the reaction 1-(5-phospho-beta-D-ribosyl)-ATP + diphosphate = 5-phospho-alpha-D-ribose 1-diphosphate + ATP. The protein operates within amino-acid biosynthesis; L-histidine biosynthesis; L-histidine from 5-phospho-alpha-D-ribose 1-diphosphate: step 1/9. In terms of biological role, catalyzes the condensation of ATP and 5-phosphoribose 1-diphosphate to form N'-(5'-phosphoribosyl)-ATP (PR-ATP). Has a crucial role in the pathway because the rate of histidine biosynthesis seems to be controlled primarily by regulation of HisG enzymatic activity. The protein is ATP phosphoribosyltransferase of Streptococcus gordonii (strain Challis / ATCC 35105 / BCRC 15272 / CH1 / DL1 / V288).